The following is a 634-amino-acid chain: tRNA uridine 5-carboxymethylaminomethyl modification enzyme MnmG (634 aa).

13-18 (GAGHAG) contributes to the FAD binding site. An NAD(+)-binding site is contributed by 273–287 (GPRYCPSIEDKIIKF).

The protein belongs to the MnmG family. Homodimer. Heterotetramer of two MnmE and two MnmG subunits. It depends on FAD as a cofactor.

The protein resides in the cytoplasm. In terms of biological role, NAD-binding protein involved in the addition of a carboxymethylaminomethyl (cmnm) group at the wobble position (U34) of certain tRNAs, forming tRNA-cmnm(5)s(2)U34. This Buchnera aphidicola subsp. Cinara cedri (strain Cc) protein is tRNA uridine 5-carboxymethylaminomethyl modification enzyme MnmG.